The sequence spans 1121 residues: Solute carrier family 38 member 10 (1121 aa).

A run of 10 helical transmembrane segments spans residues 4 to 24, 36 to 58, 84 to 104, 120 to 140, 153 to 173, 229 to 249, 272 to 292, 323 to 343, 345 to 365, and 378 to 398; these read AAAS…GVSV, IVLG…MFLV, LVET…YVVI, VGGT…VLPL, FSAM…LSSL, IFAS…FFGY, MLRV…ILPC, ALTL…PNVE, ILGL…PALI, and VVLW…LSVS. Disordered regions lie at residues 434-691, 731-904, and 965-1068; these read VVAV…EEAG, KEIH…AATG, and ISDG…ELAP. 4 stretches are compositionally biased toward basic and acidic residues: residues 439–454, 466–475, 493–508, and 544–559; these read EDGR…REEL, PGREDGKEAQ, EAHR…KVVV, and DSER…EVGK. Ser612 bears the Phosphoserine mark. Composition is skewed to basic and acidic residues over residues 645–659, 668–679, 731–752, 763–773, 802–811, and 863–876; these read DSDH…EEKP, EPREQRDVERAG, KEIH…EVHP, EAPEGKARETM, SLEHPERPVG, and PARE…RLAE. Position 772 is a phosphothreonine (Thr772). Ser802 carries the post-translational modification Phosphoserine. Phosphoserine occurs at positions 890 and 966. Residues 976–998 show a composition bias toward basic and acidic residues; the sequence is HRLDHGGYLEMRKEARGGDHMPV. The residue at position 999 (Ser999) is a Phosphoserine. Basic and acidic residues-rich tracts occupy residues 1035–1044 and 1057–1068; these read DNAKPNRDLK and DLGPHAEGELAP.

Belongs to the amino acid/polyamine transporter 2 family.

It is found in the membrane. The catalysed reaction is L-glutamate(out) = L-glutamate(in). It carries out the reaction L-glutamine(out) = L-glutamine(in). It catalyses the reaction L-alanine(in) = L-alanine(out). The enzyme catalyses L-serine(in) = L-serine(out). The catalysed reaction is L-leucine(in) = L-leucine(out). In terms of biological role, facilitates bidirectional transport of amino acids. May act as a glutamate sensor that regulates glutamate-glutamine cycle and mTOR signaling in the brain. The transport mechanism remains to be elucidated. The protein is Solute carrier family 38 member 10 of Pongo abelii (Sumatran orangutan).